Reading from the N-terminus, the 376-residue chain is Chaperone protein DnaJ (376 aa).

The 67-residue stretch at 4-70 (DYYQILGVSK…QKRAAYDRFG (67 aa)) folds into the J domain. Residues 139 to 217 (GVEKNISFSS…CHGLGRYHKQ (79 aa)) form a CR-type zinc finger. Positions 152, 155, 169, 172, 191, 194, 205, and 208 each coordinate Zn(2+). CXXCXGXG motif repeat units lie at residues 152 to 159 (CDTCHGSG), 169 to 176 (CDACGGVG), 191 to 198 (CHKCQGNG), and 205 to 212 (CKKCHGLG).

Belongs to the DnaJ family. In terms of assembly, homodimer. Requires Zn(2+) as cofactor.

The protein localises to the cytoplasm. In terms of biological role, participates actively in the response to hyperosmotic and heat shock by preventing the aggregation of stress-denatured proteins and by disaggregating proteins, also in an autonomous, DnaK-independent fashion. Unfolded proteins bind initially to DnaJ; upon interaction with the DnaJ-bound protein, DnaK hydrolyzes its bound ATP, resulting in the formation of a stable complex. GrpE releases ADP from DnaK; ATP binding to DnaK triggers the release of the substrate protein, thus completing the reaction cycle. Several rounds of ATP-dependent interactions between DnaJ, DnaK and GrpE are required for fully efficient folding. Also involved, together with DnaK and GrpE, in the DNA replication of plasmids through activation of initiation proteins. This Rickettsia bellii (strain RML369-C) protein is Chaperone protein DnaJ.